Reading from the N-terminus, the 151-residue chain is Protein A151R (151 aa).

Zn(2+) is bound by residues His102, Cys109, Cys132, and Cys135. The Thioredoxin WCTKC motif motif lies at 131–135 (WCTKC).

This sequence belongs to the asfivirus A151R family. Monomer. Homodimer. Interacts with protein B119L. Interacts with membrane protein E248R. It depends on Zn(2+) as a cofactor.

Functionally, may participate in a redox cascade for the formation of disulfide bonds in viral proteins. In African swine fever virus (strain Badajoz 1971 Vero-adapted) (Ba71V), this protein is Protein A151R.